The following is a 448-amino-acid chain: Trigger factor (448 aa).

The PPIase FKBP-type domain maps to 172-257 (GDRVTVDFVG…MKKIEWPHLP (86 aa)).

This sequence belongs to the FKBP-type PPIase family. Tig subfamily.

It localises to the cytoplasm. The catalysed reaction is [protein]-peptidylproline (omega=180) = [protein]-peptidylproline (omega=0). In terms of biological role, involved in protein export. Acts as a chaperone by maintaining the newly synthesized protein in an open conformation. Functions as a peptidyl-prolyl cis-trans isomerase. This Burkholderia cenocepacia (strain HI2424) protein is Trigger factor.